Here is a 296-residue protein sequence, read N- to C-terminus: Acetylglutamate kinase (296 aa).

Residues 65 to 66 (GG), Arg87, and Asn190 each bind substrate.

The protein belongs to the acetylglutamate kinase family. ArgB subfamily.

The protein localises to the cytoplasm. The catalysed reaction is N-acetyl-L-glutamate + ATP = N-acetyl-L-glutamyl 5-phosphate + ADP. It participates in amino-acid biosynthesis; L-arginine biosynthesis; N(2)-acetyl-L-ornithine from L-glutamate: step 2/4. Catalyzes the ATP-dependent phosphorylation of N-acetyl-L-glutamate. The protein is Acetylglutamate kinase of Moorella thermoacetica (strain ATCC 39073 / JCM 9320).